The primary structure comprises 397 residues: Acetate kinase 2 (397 aa).

Asn10 contacts Mg(2+). Residue Lys17 participates in ATP binding. Arg90 serves as a coordination point for substrate. Residue Asp147 is the Proton donor/acceptor of the active site. Residues 207–211, 281–283, and 329–333 each bind ATP; these read HLGNG, DAR, and GIGEN. Glu385 contacts Mg(2+).

It belongs to the acetokinase family. As to quaternary structure, homodimer. Mg(2+) serves as cofactor. Requires Mn(2+) as cofactor.

The protein resides in the cytoplasm. It carries out the reaction acetate + ATP = acetyl phosphate + ADP. It participates in metabolic intermediate biosynthesis; acetyl-CoA biosynthesis; acetyl-CoA from acetate: step 1/2. Catalyzes the formation of acetyl phosphate from acetate and ATP. Can also catalyze the reverse reaction. This chain is Acetate kinase 2, found in Vibrio vulnificus (strain CMCP6).